Reading from the N-terminus, the 210-residue chain is Pyridoxine/pyridoxamine 5'-phosphate oxidase (210 aa).

Substrate is bound by residues 7–10 (REDY) and Lys65. Residues 60 to 65 (RMVLLK), 75 to 76 (FT), Arg81, Lys82, and Gln104 each bind FMN. Tyr122, Arg126, and Ser130 together coordinate substrate. FMN is bound by residues 139 to 140 (QS) and Trp183. Position 189–191 (189–191 (RLH)) interacts with substrate. Position 193 (Arg193) interacts with FMN.

This sequence belongs to the pyridoxamine 5'-phosphate oxidase family. As to quaternary structure, homodimer. Requires FMN as cofactor.

The enzyme catalyses pyridoxamine 5'-phosphate + O2 + H2O = pyridoxal 5'-phosphate + H2O2 + NH4(+). It catalyses the reaction pyridoxine 5'-phosphate + O2 = pyridoxal 5'-phosphate + H2O2. It participates in cofactor metabolism; pyridoxal 5'-phosphate salvage; pyridoxal 5'-phosphate from pyridoxamine 5'-phosphate: step 1/1. It functions in the pathway cofactor metabolism; pyridoxal 5'-phosphate salvage; pyridoxal 5'-phosphate from pyridoxine 5'-phosphate: step 1/1. In terms of biological role, catalyzes the oxidation of either pyridoxine 5'-phosphate (PNP) or pyridoxamine 5'-phosphate (PMP) into pyridoxal 5'-phosphate (PLP). The protein is Pyridoxine/pyridoxamine 5'-phosphate oxidase of Neisseria meningitidis serogroup C (strain 053442).